The primary structure comprises 179 residues: MDLLATGRIRGTFGIEGFVKVESFSGEYEHFLGFDRVFLSILKEKLREQKYKDGWFEIEEVNLRKADALVKFKGIDNPEAAKCLTGSELFIPRDKAAPLDEGEVYVHDLCNCNLVCEGTLVGKITSVAEGGGGYLLEIAGKTSEAAAESSFYVPFNKEFIGKIDLKAKTVELMHRWILE.

The PRC barrel domain maps to glutamate 101–glutamate 179.

Belongs to the RimM family. As to quaternary structure, binds ribosomal protein uS19.

It is found in the cytoplasm. In terms of biological role, an accessory protein needed during the final step in the assembly of 30S ribosomal subunit, possibly for assembly of the head region. Essential for efficient processing of 16S rRNA. May be needed both before and after RbfA during the maturation of 16S rRNA. It has affinity for free ribosomal 30S subunits but not for 70S ribosomes. In Treponema denticola (strain ATCC 35405 / DSM 14222 / CIP 103919 / JCM 8153 / KCTC 15104), this protein is Ribosome maturation factor RimM.